The chain runs to 30 residues: Trypsin inhibitor 3 (30 aa).

3 disulfides stabilise this stretch: cysteine 4–cysteine 21, cysteine 11–cysteine 23, and cysteine 17–cysteine 29.

It belongs to the protease inhibitor I7 (squash-type serine protease inhibitor) family.

The protein localises to the secreted. Functionally, inhibits trypsin. The sequence is that of Trypsin inhibitor 3 from Momordica charantia (Bitter gourd).